The sequence spans 519 residues: Chaperone SurA (519 aa).

Residues 1–31 (MMRSLHSLRRMSGTVLALMLAAGLPLSAAQA) form the signal peptide. Low complexity-rich tracts occupy residues 31-45 (AQPA…QKPA) and 197-207 (PAAAQATRAPA). 2 disordered regions span residues 31 to 50 (AQPA…PAPS) and 196 to 221 (NPAA…PAQS). One can recognise a PpiC 1 domain in the interval 223–324 (PAMLVLAQIL…NGFHILKVVD (102 aa)). Positions 328 to 361 (GGQPAQAARPAPAPAPQQPSSFQEGPSVAAPQGP) are disordered. A PpiC 2 domain is found at 364–463 (VTQTHARHIL…FGWHLIQVLE (100 aa)).

Its subcellular location is the periplasm. It carries out the reaction [protein]-peptidylproline (omega=180) = [protein]-peptidylproline (omega=0). Its function is as follows. Chaperone involved in the correct folding and assembly of outer membrane proteins. Recognizes specific patterns of aromatic residues and the orientation of their side chains, which are found more frequently in integral outer membrane proteins. May act in both early periplasmic and late outer membrane-associated steps of protein maturation. This chain is Chaperone SurA, found in Bordetella parapertussis (strain 12822 / ATCC BAA-587 / NCTC 13253).